We begin with the raw amino-acid sequence, 474 residues long: tRNA-2-methylthio-N(6)-dimethylallyladenosine synthase (474 aa).

The 118-residue stretch at 3–120 folds into the MTTase N-terminal domain; sequence KKLHIKTWGC…LPEMINHVQG (118 aa). Cys12, Cys49, Cys83, Cys157, Cys161, and Cys164 together coordinate [4Fe-4S] cluster. Residues 143-375 form the Radical SAM core domain; it reads RAEGPTAFVS…QQRISQQAME (233 aa). The TRAM domain occupies 378 to 441; it reads RKMVGTVQRV…ASSLRGILLR (64 aa).

Belongs to the methylthiotransferase family. MiaB subfamily. As to quaternary structure, monomer. The cofactor is [4Fe-4S] cluster.

Its subcellular location is the cytoplasm. The catalysed reaction is N(6)-dimethylallyladenosine(37) in tRNA + (sulfur carrier)-SH + AH2 + 2 S-adenosyl-L-methionine = 2-methylsulfanyl-N(6)-dimethylallyladenosine(37) in tRNA + (sulfur carrier)-H + 5'-deoxyadenosine + L-methionine + A + S-adenosyl-L-homocysteine + 2 H(+). Functionally, catalyzes the methylthiolation of N6-(dimethylallyl)adenosine (i(6)A), leading to the formation of 2-methylthio-N6-(dimethylallyl)adenosine (ms(2)i(6)A) at position 37 in tRNAs that read codons beginning with uridine. The protein is tRNA-2-methylthio-N(6)-dimethylallyladenosine synthase of Yersinia pseudotuberculosis serotype O:1b (strain IP 31758).